The primary structure comprises 1292 residues: Putative late blight resistance protein homolog R1C-3 (1292 aa).

Coiled coils occupy residues 394-414 and 505-526; these read DSLA…ESMQ and RMNE…KLLN. The region spanning 505 to 792 is the NB-ARC domain; that stretch reads RMNEEIVGFE…SESFVKSCEG (288 aa). 538 to 545 lines the ATP pocket; sequence GMPGLGKT. LRR repeat units lie at residues 842 to 865, 920 to 944, 963 to 991, 1066 to 1089, 1094 to 1113, 1114 to 1142, and 1163 to 1187; these read AEEN…VYSH, FKFL…LFYL, LWNL…VWDM, PIRL…CISA, YLEL…TADH, LKHL…MFPQ, and FPNL…FMDI. The HMA domain maps to 1211-1278; sequence ETQVEDNQNT…KLRNVAYADE (68 aa).

Belongs to the disease resistance NB-LRR family.

The protein resides in the cytoplasm. The protein localises to the membrane. In terms of biological role, confers resistance to late blight (Phytophthora infestans) races carrying the avirulence gene Avr1. Resistance proteins guard the plant against pathogens that contain an appropriate avirulence protein via an indirect interaction with this avirulence protein. That triggers a defense system including the hypersensitive response, which restricts the pathogen growth. This Solanum demissum (Wild potato) protein is Putative late blight resistance protein homolog R1C-3 (R1C-3).